The following is a 311-amino-acid chain: tRNA-cytidine(32) 2-sulfurtransferase (311 aa).

A PP-loop motif motif is present at residues 47-52; sequence SGGKDS. Cysteine 122, cysteine 125, and cysteine 213 together coordinate [4Fe-4S] cluster.

The protein belongs to the TtcA family. Homodimer. The cofactor is Mg(2+). [4Fe-4S] cluster is required as a cofactor.

Its subcellular location is the cytoplasm. It carries out the reaction cytidine(32) in tRNA + S-sulfanyl-L-cysteinyl-[cysteine desulfurase] + AH2 + ATP = 2-thiocytidine(32) in tRNA + L-cysteinyl-[cysteine desulfurase] + A + AMP + diphosphate + H(+). The protein operates within tRNA modification. Catalyzes the ATP-dependent 2-thiolation of cytidine in position 32 of tRNA, to form 2-thiocytidine (s(2)C32). The sulfur atoms are provided by the cysteine/cysteine desulfurase (IscS) system. The sequence is that of tRNA-cytidine(32) 2-sulfurtransferase from Salmonella dublin (strain CT_02021853).